A 173-amino-acid chain; its full sequence is Ribosome maturation factor RimM (173 aa).

One can recognise a PRC barrel domain in the interval 90–169; the sequence is EDEYFWFDIL…RIDTKGAQDI (80 aa).

It belongs to the RimM family. Binds ribosomal protein uS19.

It localises to the cytoplasm. An accessory protein needed during the final step in the assembly of 30S ribosomal subunit, possibly for assembly of the head region. Essential for efficient processing of 16S rRNA. May be needed both before and after RbfA during the maturation of 16S rRNA. It has affinity for free ribosomal 30S subunits but not for 70S ribosomes. This is Ribosome maturation factor RimM from Nitratiruptor sp. (strain SB155-2).